A 946-amino-acid polypeptide reads, in one-letter code: Altered inheritance of mitochondria protein 3 (946 aa).

2 disordered regions span residues 1-333 (MGFW…PQMN) and 351-903 (MSST…KSLE). The span at 36-54 (ASKKHYNNSKARRERKSGK) shows a compositional bias: basic residues. Phosphoserine occurs at positions 57, 58, and 64. Acidic residues predominate over residues 59 to 68 (DEEYESEDEM). A compositionally biased stretch (basic and acidic residues) spans 69–84 (EHERKPTDIRSLKDPK). Low complexity-rich tracts occupy residues 93 to 105 (PGQKTYTGQQQQQ) and 130 to 158 (QSQYAQPQYNQYPQQQLQQGVVPQQPPIY). The segment covering 166-244 (GSNSNATSYQ…YVSHGSTNLG (79 aa)) has biased composition (polar residues). Composition is skewed to low complexity over residues 245-267 (QSQFPSGQQQQPTTQFGQQVLPS) and 306-320 (QQQQQQQQQQQQQQQ). Residues 351–364 (MSSTTNMQDSNPSY) show a composition bias toward polar residues. Positions 376–392 (GGQPPVPVRMQPQPPQP) are enriched in pro residues. The span at 463 to 472 (IQPNTTSSAA) shows a compositional bias: polar residues. Ser-473 is subject to Phosphoserine. 3 stretches are compositionally biased toward basic and acidic residues: residues 485–499 (DNERNSGNKENDEST), 523–538 (HGLDSVPSEHTRKNAS), and 608–625 (EIKDEVLPGHPSEEDRNV). Low complexity-rich tracts occupy residues 627-642 (PSLLPQSKPQSQSQSQ) and 666-675 (SQSSNSSDSS). A Phosphothreonine modification is found at Thr-728. The segment covering 748–758 (DSSKDANKYEK) has biased composition (basic and acidic residues). The span at 762-773 (PVTSSIQAQQST) shows a compositional bias: polar residues. Position 860 is a phosphothreonine (Thr-860). Pro residues predominate over residues 861–878 (PPRPPPSRSSPKKVPPVV). The span at 887 to 898 (KKPPVVPKKKPL) shows a compositional bias: basic residues.

The protein belongs to the AIM3 family. Interacts with RVS167.

The protein localises to the membrane raft. This is Altered inheritance of mitochondria protein 3 (AIM3) from Saccharomyces cerevisiae (strain Lalvin EC1118 / Prise de mousse) (Baker's yeast).